The primary structure comprises 142 residues: Transcriptional regulator MraZ (142 aa).

SpoVT-AbrB domains lie at 5-51 (ASSL…PRTE) and 77-120 (AMDV…DKAT).

Belongs to the MraZ family. Forms oligomers.

It localises to the cytoplasm. It is found in the nucleoid. This Delftia acidovorans (strain DSM 14801 / SPH-1) protein is Transcriptional regulator MraZ.